Reading from the N-terminus, the 199-residue chain is dITP/XTP pyrophosphatase (199 aa).

7–12 (SNNPGK) contacts substrate. The Proton acceptor role is filled by D68. D68 lines the Mg(2+) pocket. Residues A69, 154–157 (FGFD), K177, and 182–183 (HR) each bind substrate.

Belongs to the HAM1 NTPase family. In terms of assembly, homodimer. It depends on Mg(2+) as a cofactor.

It carries out the reaction XTP + H2O = XMP + diphosphate + H(+). The catalysed reaction is dITP + H2O = dIMP + diphosphate + H(+). It catalyses the reaction ITP + H2O = IMP + diphosphate + H(+). Pyrophosphatase that catalyzes the hydrolysis of nucleoside triphosphates to their monophosphate derivatives, with a high preference for the non-canonical purine nucleotides XTP (xanthosine triphosphate), dITP (deoxyinosine triphosphate) and ITP. Seems to function as a house-cleaning enzyme that removes non-canonical purine nucleotides from the nucleotide pool, thus preventing their incorporation into DNA/RNA and avoiding chromosomal lesions. This is dITP/XTP pyrophosphatase from Verminephrobacter eiseniae (strain EF01-2).